Reading from the N-terminus, the 269-residue chain is Probable sulfate transport system permease protein cysT (269 aa).

A run of 7 helical transmembrane segments spans residues serine 10–leucine 30, methionine 60–valine 80, alanine 92–valine 112, valine 130–valine 150, phenylalanine 179–phenylalanine 199, serine 208–phenylalanine 228, and threonine 240–isoleucine 260. One can recognise an ABC transmembrane type-1 domain in the interval tyrosine 54–valine 255.

The protein belongs to the binding-protein-dependent transport system permease family. CysTW subfamily.

Its subcellular location is the plastid. It is found in the chloroplast membrane. In terms of biological role, part of the ABC transporter complex cysAWTP (TC 3.A.1.6.1) involved in sulfate/thiosulfate import. Probably responsible for the translocation of the substrate across the membrane. The chain is Probable sulfate transport system permease protein cysT (cysT) from Mesostigma viride (Green alga).